The sequence spans 159 residues: Large ribosomal subunit protein uL22c (159 aa).

It belongs to the universal ribosomal protein uL22 family. Part of the 50S ribosomal subunit.

The protein localises to the plastid. It is found in the chloroplast. In terms of biological role, this protein binds specifically to 23S rRNA. The globular domain of the protein is located near the polypeptide exit tunnel on the outside of the subunit, while an extended beta-hairpin is found that lines the wall of the exit tunnel in the center of the 70S ribosome. The protein is Large ribosomal subunit protein uL22c (rpl22) of Ipomoea purpurea (Common morning glory).